Here is a 387-residue protein sequence, read N- to C-terminus: Succinate--CoA ligase [ADP-forming] subunit beta (387 aa).

The ATP-grasp domain occupies 9 to 236; that stretch reads KGLFAKHNVP…RAATDPLELK (228 aa). Residues Lys45, 52–54, Ser94, and Glu99 each bind ATP; that span reads GRG. 2 residues coordinate Mg(2+): Asn191 and Asp205. Residues Asn256 and 318 to 320 each bind substrate; that span reads GIT.

This sequence belongs to the succinate/malate CoA ligase beta subunit family. In terms of assembly, heterotetramer of two alpha and two beta subunits. Mg(2+) serves as cofactor.

It catalyses the reaction succinate + ATP + CoA = succinyl-CoA + ADP + phosphate. The catalysed reaction is GTP + succinate + CoA = succinyl-CoA + GDP + phosphate. It participates in carbohydrate metabolism; tricarboxylic acid cycle; succinate from succinyl-CoA (ligase route): step 1/1. Functionally, succinyl-CoA synthetase functions in the citric acid cycle (TCA), coupling the hydrolysis of succinyl-CoA to the synthesis of either ATP or GTP and thus represents the only step of substrate-level phosphorylation in the TCA. The beta subunit provides nucleotide specificity of the enzyme and binds the substrate succinate, while the binding sites for coenzyme A and phosphate are found in the alpha subunit. The protein is Succinate--CoA ligase [ADP-forming] subunit beta of Mycobacterium ulcerans (strain Agy99).